Consider the following 611-residue polypeptide: Broad-specificity linear acyl-CoA dehydrogenase FadE5 (611 aa).

Residues 162–165 (MVLT), S171, and T198 each bind FAD. S171 contributes to the a 2,3-saturated acyl-CoA binding site. A 2,3-saturated acyl-CoA contacts are provided by residues 224–225 (TK) and R301. FAD is bound at residue R326. An a 2,3-saturated acyl-CoA-binding site is contributed by K338. Residue 420–424 (QTLGG) participates in FAD binding. E447 contributes to the a 2,3-saturated acyl-CoA binding site. E447 functions as the Proton acceptor in the catalytic mechanism. FAD is bound at residue T449. A 2,3-saturated acyl-CoA-binding positions include D456 and 460–461 (RK).

This sequence belongs to the acyl-CoA dehydrogenase family. As to quaternary structure, homodimer. FAD is required as a cofactor.

It catalyses the reaction a long-chain 2,3-saturated fatty acyl-CoA + oxidized [electron-transfer flavoprotein] + H(+) = a long-chain (2E)-enoyl-CoA + reduced [electron-transfer flavoprotein]. It carries out the reaction a medium-chain 2,3-saturated fatty acyl-CoA + oxidized [electron-transfer flavoprotein] + H(+) = a medium-chain (2E)-enoyl-CoA + reduced [electron-transfer flavoprotein]. The enzyme catalyses a short-chain 2,3-saturated fatty acyl-CoA + oxidized [electron-transfer flavoprotein] + H(+) = a short-chain (2E)-enoyl-CoA + reduced [electron-transfer flavoprotein]. The catalysed reaction is octadecanoyl-CoA + oxidized [electron-transfer flavoprotein] + H(+) = (2E)-octadecenoyl-CoA + reduced [electron-transfer flavoprotein]. It catalyses the reaction oxidized [electron-transfer flavoprotein] + hexadecanoyl-CoA + H(+) = (2E)-hexadecenoyl-CoA + reduced [electron-transfer flavoprotein]. It carries out the reaction dodecanoyl-CoA + oxidized [electron-transfer flavoprotein] + H(+) = (2E)-dodecenoyl-CoA + reduced [electron-transfer flavoprotein]. The enzyme catalyses decanoyl-CoA + oxidized [electron-transfer flavoprotein] + H(+) = (2E)-decenoyl-CoA + reduced [electron-transfer flavoprotein]. The catalysed reaction is hexanoyl-CoA + oxidized [electron-transfer flavoprotein] + H(+) = (2E)-hexenoyl-CoA + reduced [electron-transfer flavoprotein]. It catalyses the reaction butanoyl-CoA + oxidized [electron-transfer flavoprotein] + H(+) = (2E)-butenoyl-CoA + reduced [electron-transfer flavoprotein]. Its pathway is lipid metabolism; fatty acid metabolism. Its function is as follows. Acyl-CoA dehydrogenase that exhibits broad specificity for linear acyl-CoA substrates, with a preference for long-chain substrates. In Mycobacterium tuberculosis (strain ATCC 25618 / H37Rv), this protein is Broad-specificity linear acyl-CoA dehydrogenase FadE5.